The primary structure comprises 181 residues: ATP-dependent protease subunit HslV (181 aa).

The active site involves Thr-9. The Na(+) site is built by Ser-166, Cys-169, and Thr-172.

It belongs to the peptidase T1B family. HslV subfamily. In terms of assembly, a double ring-shaped homohexamer of HslV is capped on each side by a ring-shaped HslU homohexamer. The assembly of the HslU/HslV complex is dependent on binding of ATP.

Its subcellular location is the cytoplasm. It carries out the reaction ATP-dependent cleavage of peptide bonds with broad specificity.. With respect to regulation, allosterically activated by HslU binding. In terms of biological role, protease subunit of a proteasome-like degradation complex believed to be a general protein degrading machinery. In Staphylococcus haemolyticus (strain JCSC1435), this protein is ATP-dependent protease subunit HslV.